The sequence spans 296 residues: Lipoyl synthase (296 aa).

Residues Cys37, Cys42, Cys48, Cys63, Cys67, Cys70, and Ser276 each contribute to the [4Fe-4S] cluster site. A Radical SAM core domain is found at 49 to 265; sequence WSKKHTTVMI…ERVAKTKGFL (217 aa).

Belongs to the radical SAM superfamily. Lipoyl synthase family. The cofactor is [4Fe-4S] cluster.

It is found in the cytoplasm. The catalysed reaction is [[Fe-S] cluster scaffold protein carrying a second [4Fe-4S](2+) cluster] + N(6)-octanoyl-L-lysyl-[protein] + 2 oxidized [2Fe-2S]-[ferredoxin] + 2 S-adenosyl-L-methionine + 4 H(+) = [[Fe-S] cluster scaffold protein] + N(6)-[(R)-dihydrolipoyl]-L-lysyl-[protein] + 4 Fe(3+) + 2 hydrogen sulfide + 2 5'-deoxyadenosine + 2 L-methionine + 2 reduced [2Fe-2S]-[ferredoxin]. It participates in protein modification; protein lipoylation via endogenous pathway; protein N(6)-(lipoyl)lysine from octanoyl-[acyl-carrier-protein]: step 2/2. Catalyzes the radical-mediated insertion of two sulfur atoms into the C-6 and C-8 positions of the octanoyl moiety bound to the lipoyl domains of lipoate-dependent enzymes, thereby converting the octanoylated domains into lipoylated derivatives. In Rickettsia massiliae (strain Mtu5), this protein is Lipoyl synthase.